The primary structure comprises 403 residues: Phosphoglycerate kinase (403 aa).

Substrate contacts are provided by residues D21 to N23, R36, H59 to R62, R119, and R159. ATP is bound by residues K214, G301, E332, and G359–S362.

This sequence belongs to the phosphoglycerate kinase family. In terms of assembly, monomer.

It localises to the cytoplasm. It catalyses the reaction (2R)-3-phosphoglycerate + ATP = (2R)-3-phospho-glyceroyl phosphate + ADP. The protein operates within carbohydrate degradation; glycolysis; pyruvate from D-glyceraldehyde 3-phosphate: step 2/5. This chain is Phosphoglycerate kinase, found in Lactobacillus helveticus (strain DPC 4571).